Here is a 352-residue protein sequence, read N- to C-terminus: Holliday junction branch migration complex subunit RuvB (352 aa).

The interval 13 to 201 is large ATPase domain (RuvB-L); the sequence is FSLRKKELRL…FGISQKIEFY (189 aa). Residues Arg41, Gly82, Lys85, Thr86, Thr87, 148 to 150, Arg191, Tyr201, and Arg238 contribute to the ATP site; that span reads EDF. Thr86 contacts Mg(2+). Residues 202-273 are small ATPAse domain (RuvB-S); it reads TCDELKQIID…LIKKALNSYQ (72 aa). Residues 276–352 form a head domain (RuvB-H) region; it reads EKGLDYVDRQ…KYIDSKNDNF (77 aa). DNA-binding residues include Arg330 and Arg335.

Belongs to the RuvB family. In terms of assembly, homohexamer. Forms an RuvA(8)-RuvB(12)-Holliday junction (HJ) complex. HJ DNA is sandwiched between 2 RuvA tetramers; dsDNA enters through RuvA and exits via RuvB. An RuvB hexamer assembles on each DNA strand where it exits the tetramer. Each RuvB hexamer is contacted by two RuvA subunits (via domain III) on 2 adjacent RuvB subunits; this complex drives branch migration. In the full resolvosome a probable DNA-RuvA(4)-RuvB(12)-RuvC(2) complex forms which resolves the HJ.

The protein resides in the cytoplasm. It catalyses the reaction ATP + H2O = ADP + phosphate + H(+). Functionally, the RuvA-RuvB-RuvC complex processes Holliday junction (HJ) DNA during genetic recombination and DNA repair, while the RuvA-RuvB complex plays an important role in the rescue of blocked DNA replication forks via replication fork reversal (RFR). RuvA specifically binds to HJ cruciform DNA, conferring on it an open structure. The RuvB hexamer acts as an ATP-dependent pump, pulling dsDNA into and through the RuvAB complex. RuvB forms 2 homohexamers on either side of HJ DNA bound by 1 or 2 RuvA tetramers; 4 subunits per hexamer contact DNA at a time. Coordinated motions by a converter formed by DNA-disengaged RuvB subunits stimulates ATP hydrolysis and nucleotide exchange. Immobilization of the converter enables RuvB to convert the ATP-contained energy into a lever motion, pulling 2 nucleotides of DNA out of the RuvA tetramer per ATP hydrolyzed, thus driving DNA branch migration. The RuvB motors rotate together with the DNA substrate, which together with the progressing nucleotide cycle form the mechanistic basis for DNA recombination by continuous HJ branch migration. Branch migration allows RuvC to scan DNA until it finds its consensus sequence, where it cleaves and resolves cruciform DNA. The polypeptide is Holliday junction branch migration complex subunit RuvB (Prochlorococcus marinus (strain MIT 9312)).